A 1203-amino-acid polypeptide reads, in one-letter code: DNA-directed RNA polymerase subunit beta' (1203 aa).

Zn(2+) is bound by residues Cys-60, Cys-62, Cys-75, and Cys-78. Positions 449, 451, and 453 each coordinate Mg(2+). 4 residues coordinate Zn(2+): Cys-818, Cys-892, Cys-899, and Cys-902.

This sequence belongs to the RNA polymerase beta' chain family. The RNAP catalytic core consists of 2 alpha, 1 beta, 1 beta' and 1 omega subunit. When a sigma factor is associated with the core the holoenzyme is formed, which can initiate transcription. Requires Mg(2+) as cofactor. Zn(2+) serves as cofactor.

The enzyme catalyses RNA(n) + a ribonucleoside 5'-triphosphate = RNA(n+1) + diphosphate. Its function is as follows. DNA-dependent RNA polymerase catalyzes the transcription of DNA into RNA using the four ribonucleoside triphosphates as substrates. The protein is DNA-directed RNA polymerase subunit beta' of Bacillus thuringiensis (strain Al Hakam).